We begin with the raw amino-acid sequence, 103 residues long: Large ribosomal subunit protein bL21 (103 aa).

It belongs to the bacterial ribosomal protein bL21 family. In terms of assembly, part of the 50S ribosomal subunit. Contacts protein L20.

In terms of biological role, this protein binds to 23S rRNA in the presence of protein L20. The polypeptide is Large ribosomal subunit protein bL21 (Nocardia farcinica (strain IFM 10152)).